The primary structure comprises 444 residues: Zeaxanthin 4-ketolase (444 aa).

The interval 408–444 is disordered; sequence VAGGSSSGGGGEGGKPGAGEHGLLQRQRQLAPVGVMA. Residues 412–427 are compositionally biased toward gly residues; it reads SSSGGGGEGGKPGAGE.

The enzyme catalyses all-trans-adonixanthin + 2 AH2 + 2 O2 = all-trans-(3S,3'S)-astaxanthin + 2 A + 3 H2O. The catalysed reaction is all-trans-zeaxanthin + 2 AH2 + 2 O2 = all-trans-adonixanthin + 2 A + 3 H2O. It catalyses the reaction echinenone + 2 AH2 + 2 O2 = canthaxanthin + 2 A + 3 H2O. It carries out the reaction all-trans-beta-carotene + 2 AH2 + 2 O2 = echinenone + 2 A + 3 H2O. Its pathway is carotenoid biosynthesis; astaxanthin biosynthesis. Involved in the biosynthesis of ketocarotenoids which are powerful anti-oxidative molecules. Catalyzes the conversion of zeaxanthin to astaxanthin via adonixanthin. Catalyzes the conversion of beta-carotene to canthaxanthin via echinenone. This Chlamydomonas reinhardtii (Chlamydomonas smithii) protein is Zeaxanthin 4-ketolase.